A 289-amino-acid polypeptide reads, in one-letter code: Small ribosomal subunit protein uS2C (289 aa).

Belongs to the universal ribosomal protein uS2 family. As to quaternary structure, component of the small ribosomal subunit. Mature ribosomes consist of a small (40S) and a large (60S) subunit. The 40S subunit contains about 33 different proteins and 1 molecule of RNA (18S). The 60S subunit contains about 49 different proteins and 3 molecules of RNA (25S, 5.8S and 5S). Interacts with rps21.

The protein localises to the cytoplasm. Functionally, required for the assembly and/or stability of the 40S ribosomal subunit. Required for the processing of the 20S rRNA-precursor to mature 18S rRNA in a late step of the maturation of 40S ribosomal subunits. This Schizosaccharomyces japonicus (strain yFS275 / FY16936) (Fission yeast) protein is Small ribosomal subunit protein uS2C (rps0c).